Reading from the N-terminus, the 434-residue chain is MEKEVIVVGAGLAGSEAAYQLAKRGIKVKLYEMKAKKKTPAHSKDYFSELVCSNSLGSDSLENASGLMKEELRILGSLLIEVADKNRVPAGQALAVDRDGFSEEVTKILKNTKNIEIIEEEFTEFPNDKIVIIASGPLTSDKLFQKISEITGEESLYFYDAAAPIVTFESIDMNKAYFQSRYGKGDGEYINCPMNKEEYYNFYNELIKAERAELKNFEKEKLFDACMPIEKIAMSGEKTMTFGPLKPKGLINPKTEKMDYAVVQLRQDDKEGKLYNIVGFQTNLKFGEQKRVFSMIPGLENAEFIRYGVMHRNTFINSTKLLDKTLKLKNKDNIYFAGQITGGEGYVTAIATGMYVAMNVANRLENKEEFILEDISEIGAIVNYITEEKKKFQPMGANFGIIRSLDENIRDKKEKYRKLSERAIEYLKNSIKGV.

An FAD-binding site is contributed by 9–14; it reads GAGLAG.

The protein belongs to the MnmG family. TrmFO subfamily. FAD serves as cofactor.

It localises to the cytoplasm. The catalysed reaction is uridine(54) in tRNA + (6R)-5,10-methylene-5,6,7,8-tetrahydrofolate + NADH + H(+) = 5-methyluridine(54) in tRNA + (6S)-5,6,7,8-tetrahydrofolate + NAD(+). It catalyses the reaction uridine(54) in tRNA + (6R)-5,10-methylene-5,6,7,8-tetrahydrofolate + NADPH + H(+) = 5-methyluridine(54) in tRNA + (6S)-5,6,7,8-tetrahydrofolate + NADP(+). Its function is as follows. Catalyzes the folate-dependent formation of 5-methyl-uridine at position 54 (M-5-U54) in all tRNAs. This Fusobacterium nucleatum subsp. nucleatum (strain ATCC 25586 / DSM 15643 / BCRC 10681 / CIP 101130 / JCM 8532 / KCTC 2640 / LMG 13131 / VPI 4355) protein is Methylenetetrahydrofolate--tRNA-(uracil-5-)-methyltransferase TrmFO.